The chain runs to 1075 residues: Carbamoyl phosphate synthase large chain (1075 aa).

Positions 2–403 (PKRTDIKSIL…SLQKALRGLE (402 aa)) are carboxyphosphate synthetic domain. ATP contacts are provided by arginine 129, arginine 169, glycine 175, glycine 176, glutamate 208, leucine 210, glutamate 215, glycine 241, isoleucine 242, histidine 243, glutamine 285, and glutamate 299. Residues 133 to 328 (DIAMKKIGLD…IAKVAAKLAV (196 aa)) form the ATP-grasp 1 domain. Residues glutamine 285, glutamate 299, and asparagine 301 each coordinate Mg(2+). Positions 285, 299, and 301 each coordinate Mn(2+). The segment at 404–553 (VGATGFDPKV…YSTYEDECEA (150 aa)) is oligomerization domain. Residues 554–936 (NPSIDRDKIM…AFAKAQLGSN (383 aa)) form a carbamoyl phosphate synthetic domain region. The ATP-grasp 2 domain maps to 679–870 (QHAVDRLKLK…LAKVAARVMA (192 aa)). 10 residues coordinate ATP: arginine 715, arginine 754, leucine 756, glutamate 761, glycine 786, valine 787, histidine 788, serine 789, glutamine 829, and glutamate 841. Mg(2+) is bound by residues glutamine 829, glutamate 841, and asparagine 843. The Mn(2+) site is built by glutamine 829, glutamate 841, and asparagine 843. Positions 937–1075 (STMKKQGRAL…QEMHAQIKKS (139 aa)) constitute an MGS-like domain. Residues 937 to 1075 (STMKKQGRAL…QEMHAQIKKS (139 aa)) are allosteric domain.

This sequence belongs to the CarB family. Composed of two chains; the small (or glutamine) chain promotes the hydrolysis of glutamine to ammonia, which is used by the large (or ammonia) chain to synthesize carbamoyl phosphate. Tetramer of heterodimers (alpha,beta)4. Mg(2+) serves as cofactor. Mn(2+) is required as a cofactor.

It catalyses the reaction hydrogencarbonate + L-glutamine + 2 ATP + H2O = carbamoyl phosphate + L-glutamate + 2 ADP + phosphate + 2 H(+). It carries out the reaction hydrogencarbonate + NH4(+) + 2 ATP = carbamoyl phosphate + 2 ADP + phosphate + 2 H(+). It participates in amino-acid biosynthesis; L-arginine biosynthesis; carbamoyl phosphate from bicarbonate: step 1/1. Its pathway is pyrimidine metabolism; UMP biosynthesis via de novo pathway; (S)-dihydroorotate from bicarbonate: step 1/3. Functionally, large subunit of the glutamine-dependent carbamoyl phosphate synthetase (CPSase). CPSase catalyzes the formation of carbamoyl phosphate from the ammonia moiety of glutamine, carbonate, and phosphate donated by ATP, constituting the first step of 2 biosynthetic pathways, one leading to arginine and/or urea and the other to pyrimidine nucleotides. The large subunit (synthetase) binds the substrates ammonia (free or transferred from glutamine from the small subunit), hydrogencarbonate and ATP and carries out an ATP-coupled ligase reaction, activating hydrogencarbonate by forming carboxy phosphate which reacts with ammonia to form carbamoyl phosphate. The chain is Carbamoyl phosphate synthase large chain from Salmonella typhimurium (strain LT2 / SGSC1412 / ATCC 700720).